A 642-amino-acid chain; its full sequence is Threonine--tRNA ligase (642 aa).

The TGS domain maps to 1-61; that stretch reads MPVITLPDGS…ENDAQLSIIT (61 aa). The interval 243-534 is catalytic; the sequence is DHRKIGKQLD…LTEEFAGFFP (292 aa). K286 carries the N6-acetyllysine modification. Residues C334, H385, and H511 each contribute to the Zn(2+) site.

This sequence belongs to the class-II aminoacyl-tRNA synthetase family. Homodimer. Zn(2+) is required as a cofactor.

It localises to the cytoplasm. It carries out the reaction tRNA(Thr) + L-threonine + ATP = L-threonyl-tRNA(Thr) + AMP + diphosphate + H(+). Its function is as follows. Catalyzes the attachment of threonine to tRNA(Thr) in a two-step reaction: L-threonine is first activated by ATP to form Thr-AMP and then transferred to the acceptor end of tRNA(Thr). Also edits incorrectly charged L-seryl-tRNA(Thr). The sequence is that of Threonine--tRNA ligase from Escherichia coli O9:H4 (strain HS).